The following is a 190-amino-acid chain: Ribosome maturation factor RimM (190 aa).

Residues 95-171 form the PRC barrel domain; sequence DPDEFYDHEL…VVMIEPPEGL (77 aa). The tract at residues 169-190 is disordered; that stretch reads EGLLDPDFGDKSNSDNSNSDND.

This sequence belongs to the RimM family. In terms of assembly, binds ribosomal protein uS19.

The protein resides in the cytoplasm. Its function is as follows. An accessory protein needed during the final step in the assembly of 30S ribosomal subunit, possibly for assembly of the head region. Essential for efficient processing of 16S rRNA. May be needed both before and after RbfA during the maturation of 16S rRNA. It has affinity for free ribosomal 30S subunits but not for 70S ribosomes. The chain is Ribosome maturation factor RimM from Rhodococcus erythropolis (strain PR4 / NBRC 100887).